A 71-amino-acid chain; its full sequence is Large ribosomal subunit protein uL30 (71 aa).

It belongs to the universal ribosomal protein uL30 family. In terms of assembly, part of the 50S ribosomal subunit.

In Borreliella burgdorferi (strain ATCC 35210 / DSM 4680 / CIP 102532 / B31) (Borrelia burgdorferi), this protein is Large ribosomal subunit protein uL30.